The primary structure comprises 4010 residues: Extracellular matrix organizing protein FRAS1 (4010 aa).

A signal peptide spans M1–G25. 5 VWFC domains span residues A26–A87, G92–V152, K156–S216, R218–A278, and R282–I342. Residues A26–S3903 are Extracellular-facing. S343 is subject to Phosphoserine. The 59-residue stretch at S358 to T416 folds into the VWFC 6 domain. FU repeat units lie at residues K408–Q459, G461–Q504, H506–N552, Q554–A598, T601–P646, H648–L704, T707–N752, E754–L799, V802–K851, R853–L899, N902–L947, T951–R996, S998–A1041, and K1045–G1088. A glycan (N-linked (GlcNAc...) asparagine) is linked at N727. 2 N-linked (GlcNAc...) asparagine glycosylation sites follow: N1094 and N1107. CSPG repeat units lie at residues T1101–S1196, A1216–N1307, A1328–S1440, A1465–A1561, P1597–T1691, G1712–S1812, and P1834–S1938. Residue N1506 is glycosylated (N-linked (GlcNAc...) asparagine). N-linked (GlcNAc...) asparagine glycosylation occurs at N1779. N-linked (GlcNAc...) asparagine glycans are attached at residues N1950 and N1980. CSPG repeat units follow at residues E1959–T2059, I2080–V2179, P2201–S2293, A2313–S2406, and T2441–K2538. 5 Calx-beta domains span residues V2545 to S2648, A2661 to A2772, A2786 to S2892, I2907 to G3009, and A3027 to G3131. Residues N2565, N2666, and N2684 are each glycosylated (N-linked (GlcNAc...) asparagine). N-linked (GlcNAc...) asparagine glycans are attached at residues N2910, N2987, N3072, N3220, N3678, and N3877. The helical transmembrane segment at I3904–V3924 threads the bilayer. The Cytoplasmic segment spans residues T3925–V4010.

Belongs to the FRAS1 family.

Its subcellular location is the cell membrane. Its function is as follows. Involved in extracellular matrix organization. Required for the regulation of epidermal-basement membrane adhesion responsible for proper organogenesis during embryonic development. Involved in brain organization and function. This chain is Extracellular matrix organizing protein FRAS1, found in Mus musculus (Mouse).